The sequence spans 142 residues: General odorant-binding protein 99a (142 aa).

The signal sequence occupies residues 1 to 16 (MKVFVAICVLIGLASA). Intrachain disulfides connect Cys33–Cys64, Cys60–Cys116, and Cys105–Cys125.

This sequence belongs to the PBP/GOBP family. As to expression, expressed in larval chemosensory organ. Specifically expressed exclusively in a subset of chemosensory sensilla on the third antennal segment.

The protein localises to the secreted. Its function is as follows. Present in the aqueous fluid surrounding olfactory sensory dendrites and are thought to aid in the capture and transport of hydrophobic odorants into and through this fluid. This Drosophila melanogaster (Fruit fly) protein is General odorant-binding protein 99a (Obp99a).